The chain runs to 491 residues: Chondroitin proteoglycan 2 (491 aa).

The first 18 residues, 1–18, serve as a signal peptide directing secretion; the sequence is MKTIVALGLLALATAASG. The Chitin-binding type-2 1 domain occupies 21–78; that stretch reads LQDCTNALDGLYAIGNCESQFLTCSGGIARIMDCPADLIYNEPLLICDWRHNVVGCEG. Residues Cys-54 and Cys-67 are joined by a disulfide bond. A disordered region spans residues 80-126; sequence GEASGEQSGEGSGEASGEGSGEASGEGSGEASGEGSGSGEGSGEENN. Positions 87-120 are enriched in gly residues; it reads SGEGSGEASGEGSGEASGEGSGEASGEGSGSGEG. The Chitin-binding type-2 2 domain occupies 125–182; it reads NNVCEGLEDGAYSSGGCTTYYFFCTDNTARFLSCPTPLFYDVATQKCAWKALVEECNG. A disulfide bridge connects residues Cys-158 and Cys-171. Residues 187 to 217 form a disordered region; sequence DGSGETSGEGSGEASGENSGENSGEGSGEFE. O-linked (Xyl...) (chondroitin sulfate) serine glycosylation is found at Ser-197 and Ser-201. A compositionally biased stretch (low complexity) spans 200-210; the sequence is ASGENSGENSG. Chitin-binding type-2 domains are found at residues 217 to 274, 279 to 334, 367 to 423, and 436 to 491; these read EPTC…ECHG, APVC…ECQE, ENEC…KCLI, and PFDC…LQCH. 2 cysteine pairs are disulfide-bonded: Cys-250-Cys-263 and Cys-310-Cys-323. Residues 336 to 367 are disordered; it reads SGEESSGEASGEQSGEGSGEASGEASGEASGE. Over residues 356–367 the composition is skewed to low complexity; the sequence is ASGEASGEASGE. The cysteines at positions 399 and 412 are disulfide-linked. An N-linked (GlcNAc...) asparagine glycan is attached at Asn-464. A disulfide bridge connects residues Cys-467 and Cys-481.

Required for polar body extrusion during cytokinesis in embryo development. Affects cortical granule size. Shown to have roles in meiotic chromosome segregation, osmotic barrier function and polarization in conjunction with cpg-2. Binds chitin. This Caenorhabditis briggsae protein is Chondroitin proteoglycan 2.